The following is a 336-amino-acid chain: tRNA N6-adenosine threonylcarbamoyltransferase (336 aa).

Residues His-114 and His-118 each coordinate Fe cation. Substrate-binding positions include 136–140 (LVSGG), Asp-169, Gly-182, Asp-186, and Asn-275. Residue Asp-301 coordinates Fe cation.

The protein belongs to the KAE1 / TsaD family. Fe(2+) serves as cofactor.

It localises to the cytoplasm. It carries out the reaction L-threonylcarbamoyladenylate + adenosine(37) in tRNA = N(6)-L-threonylcarbamoyladenosine(37) in tRNA + AMP + H(+). In terms of biological role, required for the formation of a threonylcarbamoyl group on adenosine at position 37 (t(6)A37) in tRNAs that read codons beginning with adenine. Is involved in the transfer of the threonylcarbamoyl moiety of threonylcarbamoyl-AMP (TC-AMP) to the N6 group of A37, together with TsaE and TsaB. TsaD likely plays a direct catalytic role in this reaction. This chain is tRNA N6-adenosine threonylcarbamoyltransferase, found in Streptococcus pneumoniae serotype 19F (strain G54).